The sequence spans 427 residues: Dihydroorotase (427 aa).

Residues His-60 and His-62 each contribute to the Zn(2+) site. Substrate contacts are provided by residues 62 to 64 (HFR) and Asn-94. Zn(2+) contacts are provided by Asp-152, His-179, and His-232. Asn-278 serves as a coordination point for substrate. Asp-305 provides a ligand contact to Zn(2+). Asp-305 is an active-site residue. Residues His-309 and 323–324 (FG) contribute to the substrate site.

This sequence belongs to the metallo-dependent hydrolases superfamily. DHOase family. Class I DHOase subfamily. The cofactor is Zn(2+).

The catalysed reaction is (S)-dihydroorotate + H2O = N-carbamoyl-L-aspartate + H(+). It functions in the pathway pyrimidine metabolism; UMP biosynthesis via de novo pathway; (S)-dihydroorotate from bicarbonate: step 3/3. Functionally, catalyzes the reversible cyclization of carbamoyl aspartate to dihydroorotate. The protein is Dihydroorotase of Enterococcus faecalis (strain ATCC 700802 / V583).